Reading from the N-terminus, the 194-residue chain is UPF0301 protein FTA_1286 (194 aa).

Belongs to the UPF0301 (AlgH) family.

This is UPF0301 protein FTA_1286 from Francisella tularensis subsp. holarctica (strain FTNF002-00 / FTA).